The primary structure comprises 189 residues: Potassium-transporting ATPase KdpC subunit (189 aa).

A helical membrane pass occupies residues 6 to 26; sequence PAIMMVLVFTIICGGIYPAVV.

It belongs to the KdpC family. As to quaternary structure, the system is composed of three essential subunits: KdpA, KdpB and KdpC.

It is found in the cell inner membrane. In terms of biological role, part of the high-affinity ATP-driven potassium transport (or Kdp) system, which catalyzes the hydrolysis of ATP coupled with the electrogenic transport of potassium into the cytoplasm. This subunit acts as a catalytic chaperone that increases the ATP-binding affinity of the ATP-hydrolyzing subunit KdpB by the formation of a transient KdpB/KdpC/ATP ternary complex. The protein is Potassium-transporting ATPase KdpC subunit of Geobacter metallireducens (strain ATCC 53774 / DSM 7210 / GS-15).